Here is a 249-residue protein sequence, read N- to C-terminus: Zinc import ATP-binding protein ZnuC (249 aa).

The region spanning 1–219 is the ABC transporter domain; it reads MRLVSLRNAT…PEYQALFGSG (219 aa). Position 36–43 (36–43) interacts with ATP; the sequence is GPNGSGKS.

This sequence belongs to the ABC transporter superfamily. Zinc importer (TC 3.A.1.15.5) family. As to quaternary structure, the complex is composed of two ATP-binding proteins (ZnuC), two transmembrane proteins (ZnuB) and a solute-binding protein (ZnuA).

It localises to the cell inner membrane. The enzyme catalyses Zn(2+)(out) + ATP(in) + H2O(in) = Zn(2+)(in) + ADP(in) + phosphate(in) + H(+)(in). Its function is as follows. Part of the ABC transporter complex ZnuABC involved in zinc import. Responsible for energy coupling to the transport system. The polypeptide is Zinc import ATP-binding protein ZnuC (Ruegeria sp. (strain TM1040) (Silicibacter sp.)).